A 133-amino-acid polypeptide reads, in one-letter code: Single-stranded DNA-binding protein 2 (133 aa).

The 103-residue stretch at 1-103 (MNKTILIGRL…VVAEEVKFLE (103 aa)) folds into the SSB domain.

As to quaternary structure, homotetramer.

The chain is Single-stranded DNA-binding protein 2 (ssb2) from Clostridium acetobutylicum (strain ATCC 824 / DSM 792 / JCM 1419 / IAM 19013 / LMG 5710 / NBRC 13948 / NRRL B-527 / VKM B-1787 / 2291 / W).